Here is a 277-residue protein sequence, read N- to C-terminus: Thymidylate synthase (277 aa).

Arginine 21 serves as a coordination point for dUMP. A (6R)-5,10-methylene-5,6,7,8-tetrahydrofolate-binding site is contributed by histidine 51. Residue 126 to 127 (RR) participates in dUMP binding. The active-site Nucleophile is cysteine 159. DUMP-binding positions include 179 to 182 (RSGD), asparagine 190, and 220 to 222 (HLY). Residue aspartate 182 participates in (6R)-5,10-methylene-5,6,7,8-tetrahydrofolate binding. Alanine 276 is a binding site for (6R)-5,10-methylene-5,6,7,8-tetrahydrofolate.

It belongs to the thymidylate synthase family. Bacterial-type ThyA subfamily. In terms of assembly, homodimer.

Its subcellular location is the cytoplasm. It catalyses the reaction dUMP + (6R)-5,10-methylene-5,6,7,8-tetrahydrofolate = 7,8-dihydrofolate + dTMP. It participates in pyrimidine metabolism; dTTP biosynthesis. In terms of biological role, catalyzes the reductive methylation of 2'-deoxyuridine-5'-monophosphate (dUMP) to 2'-deoxythymidine-5'-monophosphate (dTMP) while utilizing 5,10-methylenetetrahydrofolate (mTHF) as the methyl donor and reductant in the reaction, yielding dihydrofolate (DHF) as a by-product. This enzymatic reaction provides an intracellular de novo source of dTMP, an essential precursor for DNA biosynthesis. The protein is Thymidylate synthase of Alcanivorax borkumensis (strain ATCC 700651 / DSM 11573 / NCIMB 13689 / SK2).